Consider the following 620-residue polypeptide: Chaperone protein DnaK (620 aa).

Threonine 197 is subject to Phosphothreonine; by autocatalysis. Positions 597–620 (AMANKNNAEQPKKKDDDVIDAEVE) are disordered.

The protein belongs to the heat shock protein 70 family.

Acts as a chaperone. This Helicobacter acinonychis (strain Sheeba) protein is Chaperone protein DnaK.